We begin with the raw amino-acid sequence, 403 residues long: Tyrosine--tRNA ligase (403 aa).

A 'HIGH' region motif is present at residues 42–51; it reads PTAPDLHLGH. Positions 226 to 230 match the 'KMSKS' region motif; that stretch reads KMSKS. Position 229 (K229) interacts with ATP. The 61-residue stretch at 336 to 396 folds into the S4 RNA-binding domain; sequence MPISAVLNKA…GKKAFGRVTL (61 aa).

The protein belongs to the class-I aminoacyl-tRNA synthetase family. TyrS type 2 subfamily. In terms of assembly, homodimer.

It is found in the cytoplasm. It carries out the reaction tRNA(Tyr) + L-tyrosine + ATP = L-tyrosyl-tRNA(Tyr) + AMP + diphosphate + H(+). Catalyzes the attachment of tyrosine to tRNA(Tyr) in a two-step reaction: tyrosine is first activated by ATP to form Tyr-AMP and then transferred to the acceptor end of tRNA(Tyr). The chain is Tyrosine--tRNA ligase from Pseudomonas syringae pv. syringae (strain B728a).